Consider the following 299-residue polypeptide: Protoheme IX farnesyltransferase (299 aa).

Transmembrane regions (helical) follow at residues 27 to 47 (VVAL…HEHF), 53 to 73 (LIAL…NHLI), 97 to 117 (FNVL…LMLW), 121 to 141 (LTAY…TLYL), 149 to 169 (IVIA…SITG), 175 to 195 (AWLL…ALAI), 222 to 242 (ILLY…VGMA), 244 to 264 (YLYL…AIKL), and 273 to 293 (AIEM…ALLL).

It belongs to the UbiA prenyltransferase family. Protoheme IX farnesyltransferase subfamily.

The protein localises to the cell inner membrane. The catalysed reaction is heme b + (2E,6E)-farnesyl diphosphate + H2O = Fe(II)-heme o + diphosphate. The protein operates within porphyrin-containing compound metabolism; heme O biosynthesis; heme O from protoheme: step 1/1. Functionally, converts heme B (protoheme IX) to heme O by substitution of the vinyl group on carbon 2 of heme B porphyrin ring with a hydroxyethyl farnesyl side group. The protein is Protoheme IX farnesyltransferase of Vibrio vulnificus (strain YJ016).